Here is a 315-residue protein sequence, read N- to C-terminus: Methionyl-tRNA formyltransferase (315 aa).

113–116 is a binding site for (6S)-5,6,7,8-tetrahydrofolate; the sequence is SLLP.

Belongs to the Fmt family.

It catalyses the reaction L-methionyl-tRNA(fMet) + (6R)-10-formyltetrahydrofolate = N-formyl-L-methionyl-tRNA(fMet) + (6S)-5,6,7,8-tetrahydrofolate + H(+). Functionally, attaches a formyl group to the free amino group of methionyl-tRNA(fMet). The formyl group appears to play a dual role in the initiator identity of N-formylmethionyl-tRNA by promoting its recognition by IF2 and preventing the misappropriation of this tRNA by the elongation apparatus. This chain is Methionyl-tRNA formyltransferase, found in Pectobacterium carotovorum subsp. carotovorum (strain PC1).